The sequence spans 187 residues: Nuclear transcription factor Y subunit C-8 (187 aa).

The segment at 163–187 (WPGAWTSVSGEEEEARGKKGGDDGN) is disordered. A compositionally biased stretch (basic and acidic residues) spans 177–187 (ARGKKGGDDGN).

The protein belongs to the NFYC/HAP5 subunit family. Heterotrimeric transcription factor composed of three components, NF-YA, NF-YB and NF-YC. NF-YB and NF-YC must interact and dimerize for NF-YA association and DNA binding. As to expression, expressed in flowers and siliques.

It is found in the nucleus. In terms of biological role, stimulates the transcription of various genes by recognizing and binding to a CCAAT motif in promoters. The polypeptide is Nuclear transcription factor Y subunit C-8 (NFYC8) (Arabidopsis thaliana (Mouse-ear cress)).